A 214-amino-acid chain; its full sequence is Pyrrolidone-carboxylate peptidase (214 aa).

Catalysis depends on residues E79, C142, and H166.

It belongs to the peptidase C15 family. Homotetramer.

Its subcellular location is the cytoplasm. It carries out the reaction Release of an N-terminal pyroglutamyl group from a polypeptide, the second amino acid generally not being Pro.. Its function is as follows. Removes 5-oxoproline from various penultimate amino acid residues except L-proline. In Fusobacterium nucleatum subsp. nucleatum (strain ATCC 25586 / DSM 15643 / BCRC 10681 / CIP 101130 / JCM 8532 / KCTC 2640 / LMG 13131 / VPI 4355), this protein is Pyrrolidone-carboxylate peptidase.